Consider the following 203-residue polypeptide: V-type ATP synthase subunit D (203 aa).

This sequence belongs to the V-ATPase D subunit family.

In terms of biological role, produces ATP from ADP in the presence of a proton gradient across the membrane. The chain is V-type ATP synthase subunit D from Streptococcus pneumoniae (strain Hungary19A-6).